Reading from the N-terminus, the 723-residue chain is MSTATGPEAAPKPSAKSIYEQRKRYSTVVMADVSQYPVNHLVTFCLGEDDGVHTVEDASRKLAVMDSQGRVWAQEMLLRVSPDHVTLLDPASKEELESYPLGAIVRCDAVMPPGRSRSLLLLVCQEPERAQPDVHFFQGLRLGAELIREDIQGALHNYRSGRGERRAAALRATQEELQRDRSPAAETPPLQRRPSVRAVISTVERGAGRGRPQAKPIPEAEEAQRPEPVGTSSNADSASPDLGPRGPDLAVLQAEREVDILNHVFDDVESFVSRLQKSAEAARVLEHRERGRRSRRRAAGEGLLTLRAKPPSEAEYTDVLQKIKYAFSLLARLRGNIADPSSPELLHFLFGPLQMIVNTSGGPEFASSVRRPHLTSDAVALLRDNVTPRENELWTSLGDSWTRPGLELSPEEGPPYRPEFFSGWEPPVTDPQSRAWEDPVEKQLQHERRRRQQSAPQVAVNGHRDLEPESEPQLESETAGKWVLCNYDFQARNSSELSVKQRDVLEVLDDSRKWWKVRDPAGQEGYVPYNILTPYPGPRLHHSQSPARSLNSTPPPPPAPAPAPPPALARPRWDRPRWDSCDSLNGLDPSEKEKFSQMLIVNEELQARLAQGRSGPSRAVPGPRAPEPQLSPGSDASEVRAWLQAKGFSSGTVDALGVLTGAQLFSLQKEELRAVSPEEGARVYSQVTVQRSLLEDKEKVSELEAVMEKQKKKVEGEVEMEVI.

A PTB domain is found at 35-164 (QYPVNHLVTF…LHNYRSGRGE (130 aa)). Positions 162–183 (RGERRAAALRATQEELQRDRSP) are enriched in basic and acidic residues. Disordered regions lie at residues 162–247 (RGER…PRGP), 442–477 (KQLQHERRRRQQSAPQVAVNGHRDLEPESEPQLESE), 537–589 (GPRL…GLDP), and 609–636 (LAQGRSGPSRAVPGPRAPEPQLSPGSDA). A Phosphoserine modification is found at serine 182. Residue threonine 187 is modified to Phosphothreonine. One can recognise an SH3 domain in the interval 478–537 (TAGKWVLCNYDFQARNSSELSVKQRDVLEVLDDSRKWWKVRDPAGQEGYVPYNILTPYPG). Residues 543–552 (SQSPARSLNS) show a composition bias toward polar residues. Residues 553–568 (TPPPPPAPAPAPPPAL) show a composition bias toward pro residues. Basic and acidic residues predominate over residues 571–580 (PRWDRPRWDS). Residues 689 to 719 (VQRSLLEDKEKVSELEAVMEKQKKKVEGEVE) adopt a coiled-coil conformation.

This sequence belongs to the EPS8 family. As to quaternary structure, interacts with ABI1. Part of a complex that contains SOS1, ABI1 and EPS8L2. Associates with F-actin. Detected in placenta.

It localises to the cytoplasm. Stimulates guanine exchange activity of SOS1. May play a role in membrane ruffling and remodeling of the actin cytoskeleton. The protein is Epidermal growth factor receptor kinase substrate 8-like protein 1 (EPS8L1) of Homo sapiens (Human).